Here is a 1135-residue protein sequence, read N- to C-terminus: Retinoblastoma-like protein 2 (1135 aa).

Residues 1–43 (MASGGNQSSPPPPAAAASSEEEEEDGDTADRAQPAGSPSHQIQ) are disordered. The residue at position 410 (Ser410) is a Phosphoserine. Thr414 is subject to Phosphothreonine. Positions 414-613 (TPVSTATHSL…DRIRDNENRV (200 aa)) are domain A. Positions 414–1021 (TPVSTATHSL…QTFAMKYSQA (608 aa)) are pocket; binds E1A. The O-linked (GlcNAc) serine glycan is linked to Ser417. Residues 614–824 (PTCEEVTPPH…QGQPLTSSSI (211 aa)) are spacer. At Ser636 the chain carries Phosphoserine. Thr639 bears the Phosphothreonine mark. 3 disordered regions span residues 649–698 (DAGG…PPQP), 806–825 (ISPGGQQQNQGQPLTSSSIR), and 932–995 (RRNS…EEEE). The segment covering 656–674 (SVTSPTTLYDRYSSPTVST) has biased composition (polar residues). 3 positions are modified to phosphoserine: Ser659, Ser669, and Ser684. Residues 806–818 (ISPGGQQQNQGQP) show a composition bias toward low complexity. The domain B stretch occupies residues 825 to 1021 (RPRKTSSLSL…QTFAMKYSQA (197 aa)). Polar residues-rich tracts occupy residues 935–950 (SGSCENRSHQNSPTEL) and 958–969 (DSSPVMRSNSTL). Phosphoserine occurs at positions 942, 946, 960, 965, and 967. Thr968 carries the post-translational modification Phosphothreonine. Over residues 971–981 (VPQPSSAPPTP) the composition is skewed to pro residues. 2 positions are modified to phosphoserine: Ser975 and Ser976. Thr980 is subject to Phosphothreonine. Residues Ser1031, Ser1064, Ser1076, and Ser1108 each carry the phosphoserine modification.

Belongs to the retinoblastoma protein (RB) family. In terms of assembly, interacts with AATF, KMT5B and KMT5C. Component of the DREAM complex (also named LINC complex) at least composed of E2F4, E2F5, LIN9, LIN37, LIN52, LIN54, MYBL1, MYBL2, RBL1, RBL2, RBBP4, TFDP1 and TFDP2. The complex exists in quiescent cells where it represses cell cycle-dependent genes. It dissociates in S phase when LIN9, LIN37, LIN52 and LIN54 form a subcomplex that binds to MYBL2. Interacts with USP4. Part of the peroxisome proliferator activated receptor alpha (PPAR-alpha) interacting complex (PRIC). Interacts with RINT1. Interacts with PML. Interacts with RBBP9. Interacts with CD53. Post-translationally, during G0 and early G1 phase of the cell cycle, phosphorylated on Ser-636 and on 5 sites within the domain B. Phosphorylation on Ser-669 in G1 leads to its ubiquitin-dependent proteolysis.

Its subcellular location is the nucleus. Its function is as follows. Key regulator of entry into cell division. Directly involved in heterochromatin formation by maintaining overall chromatin structure and, in particular, that of constitutive heterochromatin by stabilizing histone methylation. Recruits and targets histone methyltransferases KMT5B and KMT5C, leading to epigenetic transcriptional repression. Controls histone H4 'Lys-20' trimethylation. Probably acts as a transcription repressor by recruiting chromatin-modifying enzymes to promoters. Potent inhibitor of E2F-mediated trans-activation, associates preferentially with E2F5. Binds to cyclins A and E. Binds to and may be involved in the transforming capacity of the adenovirus E1A protein. May act as a tumor suppressor. This is Retinoblastoma-like protein 2 (Rbl2) from Rattus norvegicus (Rat).